A 371-amino-acid chain; its full sequence is uncharacterized protein (371 aa).

Residues 20–250 (VTIRNVTKRY…PANIFVAGFI (231 aa)) enclose the ABC transporter domain. Residue 52-59 (GPSGCGKS) coordinates ATP.

This sequence belongs to the ABC transporter superfamily.

It is found in the cell inner membrane. Functionally, probably part of a binding-protein-dependent transport system y4oPQRS. This system probably transports a sugar-like molecule. Probably responsible for energy coupling to the transport system. This is an uncharacterized protein from Sinorhizobium fredii (strain NBRC 101917 / NGR234).